An 86-amino-acid polypeptide reads, in one-letter code: Large ribosomal subunit protein bL27 (86 aa).

The tract at residues 1–26 is disordered; that stretch reads MATKKAGGSSRNGRDSAGRRLGIKKS.

Belongs to the bacterial ribosomal protein bL27 family.

In Rickettsia typhi (strain ATCC VR-144 / Wilmington), this protein is Large ribosomal subunit protein bL27.